The chain runs to 295 residues: UDP-N-acetylenolpyruvoylglucosamine reductase (295 aa).

In terms of domain architecture, FAD-binding PCMH-type spans 24–188; sequence KVGGNAEIFF…LKAVFKVNKG (165 aa). Residue arginine 168 is part of the active site. Serine 217 acts as the Proton donor in catalysis. The active site involves glutamate 287.

This sequence belongs to the MurB family. The cofactor is FAD.

The protein localises to the cytoplasm. It catalyses the reaction UDP-N-acetyl-alpha-D-muramate + NADP(+) = UDP-N-acetyl-3-O-(1-carboxyvinyl)-alpha-D-glucosamine + NADPH + H(+). It functions in the pathway cell wall biogenesis; peptidoglycan biosynthesis. In terms of biological role, cell wall formation. The chain is UDP-N-acetylenolpyruvoylglucosamine reductase from Rickettsia felis (strain ATCC VR-1525 / URRWXCal2) (Rickettsia azadi).